The primary structure comprises 594 residues: Aspartate--tRNA(Asp/Asn) ligase (594 aa).

Residue E175 participates in L-aspartate binding. The aspartate stretch occupies residues Q199 to K202. L-aspartate contacts are provided by R221 and H455. Residue R221–E223 coordinates ATP. ATP is bound at residue E489. R496 contributes to the L-aspartate binding site. G541–R544 lines the ATP pocket.

It belongs to the class-II aminoacyl-tRNA synthetase family. Type 1 subfamily. Homodimer.

It is found in the cytoplasm. It carries out the reaction tRNA(Asx) + L-aspartate + ATP = L-aspartyl-tRNA(Asx) + AMP + diphosphate. In terms of biological role, aspartyl-tRNA synthetase with relaxed tRNA specificity since it is able to aspartylate not only its cognate tRNA(Asp) but also tRNA(Asn). Reaction proceeds in two steps: L-aspartate is first activated by ATP to form Asp-AMP and then transferred to the acceptor end of tRNA(Asp/Asn). The sequence is that of Aspartate--tRNA(Asp/Asn) ligase from Pelagibacter ubique (strain HTCC1062).